Consider the following 221-residue polypeptide: MKVSMSLILITFWALVTIAKAYDPSPLQDFCVAIDDPKNGVFVNGKFCKDPKQAKAEDFFSSGLNQAGITNNKVKSNVTTVNVDQIPGLNTLGISLVRIDYAPYGQNPPHTHPRATEILVLVEGTLYVGFVSSNQDNNRLFAKVLNPGDVFVFPIGMIHFQVNIGKTPAVAFAGLSSQNAGVITIADTVFGSTPPINPDILAQAFQLDVNVVKDLEAKFKN.

Positions 1-21 (MKVSMSLILITFWALVTIAKA) are cleaved as a signal peptide. Residues cysteine 31 and cysteine 48 are joined by a disulfide bond. The 152-residue stretch at 62 to 213 (SGLNQAGITN…AFQLDVNVVK (152 aa)) folds into the Cupin type-1 domain. N-linked (GlcNAc...) asparagine glycosylation occurs at asparagine 77. Residues histidine 110, histidine 112, glutamate 117, and histidine 159 each contribute to the Mn(2+) site.

The protein belongs to the germin family. Oligomer (believed to be a pentamer but probably hexamer).

It localises to the secreted. It is found in the extracellular space. Its subcellular location is the apoplast. In terms of biological role, may play a role in plant defense. Probably has no oxalate oxidase activity even if the active site is conserved. The polypeptide is Germin-like protein subfamily 1 member 15 (Arabidopsis thaliana (Mouse-ear cress)).